The following is a 318-amino-acid chain: Trans-prenyltransferase (318 aa).

The chain crosses the membrane as a helical span at residues 1-21; that stretch reads MLHLIYISIIVVLIIILISYT. Residues Lys-85, Arg-88, and His-122 each coordinate isopentenyl diphosphate. Positions 129 and 135 each coordinate Mg(2+). Position 140 (Arg-140) interacts with dimethylallyl diphosphate. Position 141 (Arg-141) interacts with isopentenyl diphosphate. Lys-216, Thr-217, and Gln-254 together coordinate dimethylallyl diphosphate.

The protein belongs to the FPP/GGPP synthase family. Asfivirus trans-prenyltransferase subfamily. Mg(2+) serves as cofactor.

The protein localises to the host endoplasmic reticulum. Its subcellular location is the host membrane. The enzyme catalyses isopentenyl diphosphate + dimethylallyl diphosphate = (2E)-geranyl diphosphate + diphosphate. It catalyses the reaction isopentenyl diphosphate + (2E)-geranyl diphosphate = (2E,6E)-farnesyl diphosphate + diphosphate. The catalysed reaction is isopentenyl diphosphate + (2E,6E)-farnesyl diphosphate = (2E,6E,10E)-geranylgeranyl diphosphate + diphosphate. It carries out the reaction isopentenyl diphosphate + (2E,6E,10E)-geranylgeranyl diphosphate = (2E,6E,10E,14E)-geranylfarnesyl diphosphate + diphosphate. It functions in the pathway isoprenoid biosynthesis; farnesyl diphosphate biosynthesis; farnesyl diphosphate from geranyl diphosphate and isopentenyl diphosphate: step 1/1. The protein operates within isoprenoid biosynthesis; geranyl diphosphate biosynthesis; geranyl diphosphate from dimethylallyl diphosphate and isopentenyl diphosphate: step 1/1. Its pathway is isoprenoid biosynthesis; geranylgeranyl diphosphate biosynthesis; geranylgeranyl diphosphate from farnesyl diphosphate and isopentenyl diphosphate: step 1/1. Trans-prenyltransferase that catalyzes the sequential condensation of isopentenyl diphosphate (IPP) with different allylic diphosphates, such as dimethylallyl diphosphate (DMAPP), geranyl diphosphate (GPP), farnesyl diphosphate (FPP) and geranylgeranyl diphosphate (GGPP), farnesyl diphosphate being the best allylic substrate. This chain is Trans-prenyltransferase, found in African swine fever virus (strain Badajoz 1971 Vero-adapted) (Ba71V).